Reading from the N-terminus, the 155-residue chain is S-ribosylhomocysteine lyase (155 aa).

Fe cation is bound by residues H58, H62, and C125.

This sequence belongs to the LuxS family. In terms of assembly, homodimer. It depends on Fe cation as a cofactor.

The enzyme catalyses S-(5-deoxy-D-ribos-5-yl)-L-homocysteine = (S)-4,5-dihydroxypentane-2,3-dione + L-homocysteine. Functionally, involved in the synthesis of autoinducer 2 (AI-2) which is secreted by bacteria and is used to communicate both the cell density and the metabolic potential of the environment. The regulation of gene expression in response to changes in cell density is called quorum sensing. Catalyzes the transformation of S-ribosylhomocysteine (RHC) to homocysteine (HC) and 4,5-dihydroxy-2,3-pentadione (DPD). The sequence is that of S-ribosylhomocysteine lyase from Chromohalobacter salexigens (strain ATCC BAA-138 / DSM 3043 / CIP 106854 / NCIMB 13768 / 1H11).